The primary structure comprises 552 residues: Outer dynein arm protein 1 (552 aa).

Residues Met-1–Leu-27 are disordered. Over residues Arg-8–Gly-22 the composition is skewed to gly residues. Coiled-coil stretches lie at residues Gly-28–Lys-59, Ser-120–Leu-260, and Thr-331–Arg-395. Disordered stretches follow at residues Asn-482–His-515 and Leu-528–Arg-552. Residues Gln-493–Glu-506 are compositionally biased toward acidic residues.

It belongs to the ODA1/DCC2 family. As to quaternary structure, component of the outer dynein arm complex.

It is found in the cytoplasm. It localises to the cytoskeleton. Its subcellular location is the cilium axoneme. Functionally, component of the outer dynein arm complex required for assembly of the outer dynein arm-docking complex (ODA-DC) and the outer dynein arm onto the doublet microtubule. In Chlamydomonas reinhardtii (Chlamydomonas smithii), this protein is Outer dynein arm protein 1 (ODA1).